A 164-amino-acid chain; its full sequence is T-cell surface glycoprotein CD3 zeta chain (164 aa).

The signal sequence occupies residues 1-21; it reads MKWKALFTAAILQAQLPITEA. Residues 22–30 lie on the Extracellular side of the membrane; the sequence is QSFGLLDPK. Residues 31–51 traverse the membrane as a helical segment; sequence LCYLLDGILFIYGVILTALFL. The Cytoplasmic segment spans residues 52–164; the sequence is RVKFSRSADA…ALHMQALPPR (113 aa). A Phosphoserine modification is found at serine 58. 3 ITAM domains span residues 61–89, 100–128, and 131–159; these read APAY…LDKR, PQRR…EIGM, and ERRR…LHMQ. Residues tyrosine 64, tyrosine 72, tyrosine 83, tyrosine 111, tyrosine 123, tyrosine 142, and tyrosine 153 each carry the phosphotyrosine modification. Residues 83–96 are compositionally biased toward basic and acidic residues; the sequence is YDVLDKRRGRDPEM. The disordered stretch occupies residues 83-111; it reads YDVLDKRRGRDPEMGGKPQRRKNPQEGLY. Residues 128 to 154 are disordered; that stretch reads MKGERRRGKGHDGLYQGLSTATKDTYD.

It belongs to the CD3Z/FCER1G family. As to quaternary structure, the TCR-CD3 complex is composed of a CD3D/CD3E and a CD3G/CD3E heterodimers that preferentially associate with TCRalpha and TCRbeta, respectively, to form TCRalpha/CD3E/CD3G and TCRbeta/CD3G/CD3E trimers. In turn, the hexamer interacts with CD3Z homodimer to form the TCR-CD3 complex. Alternatively, TCRalpha and TCRbeta can be replaced by TCRgamma and TCRdelta. Interacts with SLA. Interacts with TRAT1. Interacts with DOCK2. Interacts with SLA2. Interacts with SHB. Interacts with ZAP70. Interacts (tyrosine phosphorylated) with SHC1 (via SH2 domain). Interacts with PTPRC. Interacts with CRK; this interaction regulates CD3Z phosphorylation. Interacts (on T cell side) with CD81, ICAM1 and CD9 at immunological synapses between antigen-presenting cells and T cells. Interacts with CD160. Interacts with LY6E. The signaling subunit of immunoglobulin gamma (IgG) Fc receptor complex. As a homodimer or a heterodimer with FCER1G, associates with the ligand binding subunit FCGR3A (via transmembrane domain); this interaction is a prerequisite for Fc receptor complex expression on the cell surface. Interacts with CD5. (Microbial infection) Interacts with HIV-1 Nef; this interaction up-regulates the expression of the Fas ligand (FASLG) at the cell surface. In terms of assembly, (Microbial infection) Interacts with HIV-2 Nef protein; this interaction induces down-regulation of cell surface TCR/CD3 complexes. In terms of processing, phosphorylated on Tyr residues after T-cell receptor triggering by LCK in association with CD4/CD8. CD3Z is expressed in normal lymphoid tissue and in peripheral blood mononuclear cells (PBMCs).

The protein localises to the cell membrane. Part of the TCR-CD3 complex present on T-lymphocyte cell surface that plays an essential role in adaptive immune response. When antigen presenting cells (APCs) activate T-cell receptor (TCR), TCR-mediated signals are transmitted across the cell membrane by the CD3 chains CD3D, CD3E, CD3G and CD3Z. All CD3 chains contain immunoreceptor tyrosine-based activation motifs (ITAMs) in their cytoplasmic domain. Upon TCR engagement, these motifs become phosphorylated by Src family protein tyrosine kinases LCK and FYN, resulting in the activation of downstream signaling pathways. CD3Z ITAMs phosphorylation creates multiple docking sites for the protein kinase ZAP70 leading to ZAP70 phosphorylation and its conversion into a catalytically active enzyme. Plays an important role in intrathymic T-cell differentiation. Additionally, participates in the activity-dependent synapse formation of retinal ganglion cells (RGCs) in both the retina and dorsal lateral geniculate nucleus (dLGN). The polypeptide is T-cell surface glycoprotein CD3 zeta chain (CD247) (Homo sapiens (Human)).